A 179-amino-acid chain; its full sequence is Ribosome maturation factor RimM (179 aa).

In terms of domain architecture, PRC barrel spans 103-176; sequence EPDTYYDHQL…IVEIDPPKGL (74 aa).

Belongs to the RimM family. Binds ribosomal protein uS19.

It localises to the cytoplasm. An accessory protein needed during the final step in the assembly of 30S ribosomal subunit, possibly for assembly of the head region. Essential for efficient processing of 16S rRNA. May be needed both before and after RbfA during the maturation of 16S rRNA. It has affinity for free ribosomal 30S subunits but not for 70S ribosomes. In Mycobacterium leprae (strain Br4923), this protein is Ribosome maturation factor RimM.